We begin with the raw amino-acid sequence, 257 residues long: Probable enoyl-CoA hydratase echA17 (257 aa).

This sequence belongs to the enoyl-CoA hydratase/isomerase family.

The catalysed reaction is a (3S)-3-hydroxyacyl-CoA = a (2E)-enoyl-CoA + H2O. It carries out the reaction a 4-saturated-(3S)-3-hydroxyacyl-CoA = a (3E)-enoyl-CoA + H2O. Functionally, could possibly oxidize fatty acids using specific components. The chain is Probable enoyl-CoA hydratase echA17 (echA17) from Mycobacterium avium (strain 104).